The primary structure comprises 756 residues: 5-methyltetrahydropteroyltriglutamate--homocysteine methyltransferase (756 aa).

5-methyltetrahydropteroyltri-L-glutamate is bound by residues R20–K23 and K114. Residues I433–S435 and E486 each bind L-homocysteine. L-methionine-binding positions include I433–S435 and E486. 5-methyltetrahydropteroyltri-L-glutamate contacts are provided by residues R517–C518 and W563. Residue D601 participates in L-homocysteine binding. D601 is an L-methionine binding site. E607 contacts 5-methyltetrahydropteroyltri-L-glutamate. H643, C645, and E667 together coordinate Zn(2+). H696 functions as the Proton donor in the catalytic mechanism. C728 contacts Zn(2+).

It belongs to the vitamin-B12 independent methionine synthase family. Zn(2+) serves as cofactor.

It catalyses the reaction 5-methyltetrahydropteroyltri-L-glutamate + L-homocysteine = tetrahydropteroyltri-L-glutamate + L-methionine. It functions in the pathway amino-acid biosynthesis; L-methionine biosynthesis via de novo pathway; L-methionine from L-homocysteine (MetE route): step 1/1. Functionally, catalyzes the transfer of a methyl group from 5-methyltetrahydrofolate to homocysteine resulting in methionine formation. The sequence is that of 5-methyltetrahydropteroyltriglutamate--homocysteine methyltransferase from Mycolicibacterium paratuberculosis (strain ATCC BAA-968 / K-10) (Mycobacterium paratuberculosis).